The following is a 285-amino-acid chain: Ribosomal RNA large subunit methyltransferase F (285 aa).

This sequence belongs to the methyltransferase superfamily. METTL16/RlmF family.

The protein localises to the cytoplasm. It carries out the reaction adenosine(1618) in 23S rRNA + S-adenosyl-L-methionine = N(6)-methyladenosine(1618) in 23S rRNA + S-adenosyl-L-homocysteine + H(+). In terms of biological role, specifically methylates the adenine in position 1618 of 23S rRNA. The polypeptide is Ribosomal RNA large subunit methyltransferase F (Christiangramia forsetii (strain DSM 17595 / CGMCC 1.15422 / KT0803) (Gramella forsetii)).